We begin with the raw amino-acid sequence, 450 residues long: UDP-N-acetylglucosamine--peptide N-acetylglucosaminyltransferase stabilizing protein GtfB (450 aa).

It belongs to the GtfB family. As to quaternary structure, forms a heterotetramer with 2 subunits each of GtfA and GtfB. Part of the accessory SecA2/SecY2 protein translocation apparatus required to export cell wall protein GspB.

Its subcellular location is the cell membrane. The protein operates within protein modification; protein glycosylation. In terms of biological role, required for polymorphic O-glycosylation of GspB, a serine-rich repeat cell wall protein encoded upstream in the same operon. A substrate-binding protein that is part of the accessory SecA2/SecY2 system specifically required to export GspB. The GtfA-GtfB complex adds GlcNAc from UDP-GlcNAc to GspB, attaching the first sugar residue. Upon coexpression in E.coli with GtfA glycosylates GspB constructs. Binds the GspB protein substrate; alone this subunit only recognizes partially glycosylated GspB, but is constrained by GtfA to also recognize unglycosylated protein. The enzyme probably modifies its tertiary conformation by opening and closing its intersubunit interfaces to accomodate the increasingly glycosylated substrate. The polypeptide is UDP-N-acetylglucosamine--peptide N-acetylglucosaminyltransferase stabilizing protein GtfB (Streptococcus gordonii).